A 173-amino-acid polypeptide reads, in one-letter code: Peptide methionine sulfoxide reductase MsrA (173 aa).

Cys-10 is a catalytic residue.

Belongs to the MsrA Met sulfoxide reductase family.

It carries out the reaction L-methionyl-[protein] + [thioredoxin]-disulfide + H2O = L-methionyl-(S)-S-oxide-[protein] + [thioredoxin]-dithiol. It catalyses the reaction [thioredoxin]-disulfide + L-methionine + H2O = L-methionine (S)-S-oxide + [thioredoxin]-dithiol. In terms of biological role, has an important function as a repair enzyme for proteins that have been inactivated by oxidation. Catalyzes the reversible oxidation-reduction of methionine sulfoxide in proteins to methionine. In Acinetobacter baumannii (strain AB307-0294), this protein is Peptide methionine sulfoxide reductase MsrA.